Consider the following 299-residue polypeptide: Serine/threonine-protein kinase 1 (299 aa).

The Protein kinase domain maps to 39–277 (IATKPMFEGG…FKGLVSHPWF (239 aa)). ATP is bound by residues 45–53 (FEGGRRNNV) and lysine 66. Catalysis depends on aspartate 153, which acts as the Proton acceptor.

It belongs to the protein kinase superfamily. Ser/Thr protein kinase family.

The protein resides in the virion. It is found in the host cytoplasm. The catalysed reaction is L-seryl-[protein] + ATP = O-phospho-L-seryl-[protein] + ADP + H(+). It carries out the reaction L-threonyl-[protein] + ATP = O-phospho-L-threonyl-[protein] + ADP + H(+). Essential for viral replication. It may mediate the virus progression through DNA replication. In African swine fever virus (isolate Pig/Kenya/KEN-50/1950) (ASFV), this protein is Serine/threonine-protein kinase 1.